Reading from the N-terminus, the 1099-residue chain is MSLNNSSSVFLDSVPTNTNRFQVNVINENHESCAAGIDNTDPPHYEETSFGDEQNRLRISFRPGNQECYDNFLQTGETTKTDASFHTYDSHTNTYYLQTFGHNTMDAVPKIEYYRNTGSVSGPKVNRPSLLEIHEQLAKNVAVTPGSADRVANGEGMPGEEHAENKEEDNKAGAVKFGWVKGVLVRCMLNIWGVMLFIRLSWIVGEAGIGLGVVIILLSTMVTSITGLSTSAIATNGFVRGGGAYYLISRSLGPEFGGSIGLIFAFANAVAVAMYVVGFAETVVDLLKESDSMMVDPTNDIRIIGSITVVILLGISVAGMEWEAKAQVILLIILLIAIANFFIGTVIPSNNEKKSRGFFNYQASIFAENFGPSFTKGEGFFSVFAIFFPAATGILAGANISGDLEDPQDAIPRGTMLAIFITTVAYIGVAICVGACVVRDATGSMNDTIISGINCNGSAACGLGYDFSRCRHEPCQYGLMNNFQVMSMVSGFGPLITAGIFSATLSSALASLVSAAKVFQALCKDNIYKALQFFAKGYGKNNEPLRGYILTFVIAMAFILIAELNTIAPIISNFFLASYALINFSCFHASYAKSPGWRPAYGIYNMWVSLFGAVLCCAVMFVINWWAAVITYVIEFFLYIYVTYKKPDVNWGSSTQALSYVSALDNALELTTVEDHVKNFRPQCFVLTGGPMTRPALLDITYAFTKNSGLCICCEVFVGPRKLCVKEMNSGMAKKQAWLIKNKIKAFYAAVAADCFRDGVRSLLQASGLGRMKPNTLVIGYKKKWRKAPLTEIENYVGIIHDAFDFEIGVVIVRISQGFDISQVLQVQEELEKLEQERLALEATIKDNECEEGNGGIRGLFKKVGKLNITKPTPKKDSSINTIQSMHVGEFNQKLVEASTQFKKKQGKGTIDVWWLFDDGGLTLLIPYILTLRKKWKDCKLRIYVGGKINRIEEEKIAMASLLSKFRIKFADIHVIGDINIKPNKESWKFFEEMIEPYRLHESCKDLTTAEKLKRETPWKITDAELEAVKEKSYRQVRLNELLQEHSRAANLIVLSLPVARKGSISDLLYMAWLEILTKNLPPVLLVRGNHKNVLTFYS.

Topologically, residues 1-177 (MSLNNSSSVF…EDNKAGAVKF (177 aa)) are cytoplasmic. Residues 20 to 23 (RFQV) carry the RFXV motif motif. 2 positions are modified to phosphoserine: S60 and S90. 4 positions are modified to phosphothreonine: T94, T99, T104, and T117. S119 bears the Phosphoserine mark. The residue at position 129 (S129) is a Phosphoserine; by AMPK. The residue at position 147 (S147) is a Phosphoserine. The segment at 147–169 (SADRVANGEGMPGEEHAENKEED) is disordered. Positions 159-169 (GEEHAENKEED) are enriched in basic and acidic residues. The chain crosses the membrane as a helical span at residues 178–198 (GWVKGVLVRCMLNIWGVMLFI). Residues 199 to 201 (RLS) lie on the Extracellular side of the membrane. The chain crosses the membrane as a helical span at residues 202–222 (WIVGEAGIGLGVVIILLSTMV). Residues 223-259 (TSITGLSTSAIATNGFVRGGGAYYLISRSLGPEFGGS) are Cytoplasmic-facing. The helical transmembrane segment at 260–280 (IGLIFAFANAVAVAMYVVGFA) threads the bilayer. The Extracellular segment spans residues 281–302 (ETVVDLLKESDSMMVDPTNDIR). The helical transmembrane segment at 303–323 (IIGSITVVILLGISVAGMEWE) threads the bilayer. At 324 to 327 (AKAQ) the chain is on the cytoplasmic side. Residues 328–348 (VILLIILLIAIANFFIGTVIP) traverse the membrane as a helical segment. The Extracellular portion of the chain corresponds to 349-379 (SNNEKKSRGFFNYQASIFAENFGPSFTKGEG). The helical transmembrane segment at 380–400 (FFSVFAIFFPAATGILAGANI) threads the bilayer. At 401 to 417 (SGDLEDPQDAIPRGTML) the chain is on the cytoplasmic side. A helical membrane pass occupies residues 418-438 (AIFITTVAYIGVAICVGACVV). Over 439–550 (RDATGSMNDT…NNEPLRGYIL (112 aa)) the chain is Extracellular. 2 N-linked (GlcNAc...) asparagine glycosylation sites follow: N446 and N456. The next 2 membrane-spanning stretches (helical) occupy residues 551–571 (TFVIAMAFILIAELNTIAPII) and 572–592 (SNFFLASYALINFSCFHASYA). Topologically, residues 593 to 609 (KSPGWRPAYGIYNMWVS) are extracellular. Residues 610 to 630 (LFGAVLCCAVMFVINWWAAVI) traverse the membrane as a helical segment. Residues 631 to 1099 (TYVIEFFLYI…NHKNVLTFYS (469 aa)) are Cytoplasmic-facing.

The protein belongs to the SLC12A transporter family. In terms of assembly, when phosphorylated, interacts with PPP3CB. Post-translationally, phosphorylated at Ser-90, Thr-99 and Thr-104 by OXSR1/OSR1 and STK39/SPAK downstream of WNK kinases (WNK1, WNK2, WNK3 or WNK4), promoting its activity. Predominant in kidney. The 3 isoforms are differentially distributed within the kidney: B almost exclusively in cortex, F almost exclusively in medulla, and A about equally distributed.

It localises to the apical cell membrane. It catalyses the reaction K(+)(out) + 2 chloride(out) + Na(+)(out) = K(+)(in) + 2 chloride(in) + Na(+)(in). With respect to regulation, activated following phosphorylation by OXSR1/OSR1 and STK39/SPAK downstream of WNK kinases (WNK1, WNK2, WNK3 or WNK4). In terms of biological role, renal sodium, potassium and chloride ion cotransporter that mediates the transepithelial NaCl reabsorption in the thick ascending limb and plays an essential role in the urinary concentration and volume regulation. Electrically silent transporter system. The protein is Solute carrier family 12 member 1 (SLC12A1) of Oryctolagus cuniculus (Rabbit).